A 579-amino-acid chain; its full sequence is V-type ATP synthase alpha chain (579 aa).

Position 238–245 (G238–T245) interacts with ATP.

This sequence belongs to the ATPase alpha/beta chains family.

It carries out the reaction ATP + H2O + 4 H(+)(in) = ADP + phosphate + 5 H(+)(out). Its function is as follows. Produces ATP from ADP in the presence of a proton gradient across the membrane. The V-type alpha chain is a catalytic subunit. This chain is V-type ATP synthase alpha chain, found in Borrelia hermsii (strain HS1 / DAH).